Here is a 542-residue protein sequence, read N- to C-terminus: CTP synthase (542 aa).

Residues 1–265 form an amidoligase domain region; that stretch reads MARYVFITGG…DSEVLCAFGI (265 aa). Ser13 serves as a coordination point for CTP. Position 13 (Ser13) interacts with UTP. An ATP-binding site is contributed by 14 to 19; sequence SLGKGI. Tyr54 contributes to the L-glutamine binding site. Asp71 lines the ATP pocket. Mg(2+) contacts are provided by Asp71 and Glu139. Residues 146–148, 186–191, and Lys222 each bind CTP; these read DIE and KTKPTQ. Residues 186–191 and Lys222 each bind UTP; that span reads KTKPTQ. The Glutamine amidotransferase type-1 domain maps to 291-541; that stretch reads TIAVVGKYTG…IEAAVEQSRL (251 aa). Residue Ala353 participates in L-glutamine binding. Cys380 functions as the Nucleophile; for glutamine hydrolysis in the catalytic mechanism. L-glutamine-binding positions include 381–384, Glu404, and Arg469; that span reads FGMQ. Catalysis depends on residues His514 and Glu516.

Belongs to the CTP synthase family. As to quaternary structure, homotetramer.

It catalyses the reaction UTP + L-glutamine + ATP + H2O = CTP + L-glutamate + ADP + phosphate + 2 H(+). The enzyme catalyses L-glutamine + H2O = L-glutamate + NH4(+). It carries out the reaction UTP + NH4(+) + ATP = CTP + ADP + phosphate + 2 H(+). The protein operates within pyrimidine metabolism; CTP biosynthesis via de novo pathway; CTP from UDP: step 2/2. Its activity is regulated as follows. Allosterically activated by GTP, when glutamine is the substrate; GTP has no effect on the reaction when ammonia is the substrate. The allosteric effector GTP functions by stabilizing the protein conformation that binds the tetrahedral intermediate(s) formed during glutamine hydrolysis. Inhibited by the product CTP, via allosteric rather than competitive inhibition. Its function is as follows. Catalyzes the ATP-dependent amination of UTP to CTP with either L-glutamine or ammonia as the source of nitrogen. Regulates intracellular CTP levels through interactions with the four ribonucleotide triphosphates. This is CTP synthase from Bartonella tribocorum (strain CIP 105476 / IBS 506).